Here is a 191-residue protein sequence, read N- to C-terminus: Calcium-activated potassium channel subunit beta-1 (191 aa).

Topologically, residues 1–15 (MGKKLVMAQKRGETR) are cytoplasmic. Residues 16–36 (ALCLGVAMVMCAVIAYYILGT) traverse the membrane as a helical segment. Over 37–157 (TMLPLYQKSV…YRRLYGPQTL (121 aa)) the chain is Extracellular. Residues Asn-80 and Asn-142 are each glycosylated (N-linked (GlcNAc...) asparagine). Residues 158 to 178 (LFSLFWPTFLLTGGLLIIAMV) form a helical membrane-spanning segment. Residues 179–191 (KINQSLSILAAQR) lie on the Cytoplasmic side of the membrane.

Belongs to the KCNMB (TC 8.A.14.1) family. KCNMB1 subfamily. Interacts with KCNMA1 tetramer. There are probably 4 molecules of KCMNB1 per KCNMA1 tetramer. In terms of processing, N-glycosylated.

The protein localises to the membrane. Its function is as follows. Regulatory subunit of the calcium activated potassium KCNMA1 (maxiK) channel. Modulates the calcium sensitivity and gating kinetics of KCNMA1, thereby contributing to KCNMA1 channel diversity. Increases the apparent Ca(2+)/voltage sensitivity of the KCNMA1 channel. It also modifies KCNMA1 channel kinetics and alters its pharmacological properties. It slows down the activation and the deactivation kinetics of the channel. Acts as a negative regulator of smooth muscle contraction by enhancing the calcium sensitivity to KCNMA1. Its presence is also a requirement for internal binding of the KCNMA1 channel opener dehydrosoyasaponin I (DHS-1) triterpene glycoside and for external binding of the agonist hormone 17-beta-estradiol (E2). Increases the binding activity of charybdotoxin (CTX) toxin to KCNMA1 peptide blocker by increasing the CTX association rate and decreasing the dissociation rate. The sequence is that of Calcium-activated potassium channel subunit beta-1 (KCNMB1) from Canis lupus familiaris (Dog).